Reading from the N-terminus, the 410-residue chain is Arginine deiminase (410 aa).

The active-site Amidino-cysteine intermediate is Cys400.

The protein belongs to the arginine deiminase family.

The protein resides in the cytoplasm. It catalyses the reaction L-arginine + H2O = L-citrulline + NH4(+). The protein operates within amino-acid degradation; L-arginine degradation via ADI pathway; carbamoyl phosphate from L-arginine: step 1/2. The chain is Arginine deiminase (arcA) from Lactococcus lactis subsp. lactis (strain IL1403) (Streptococcus lactis).